The primary structure comprises 423 residues: Mannose-6-phosphate isomerase (423 aa).

An N-acetylalanine modification is found at alanine 2. Residues serine 102 and serine 108 each carry the phosphoserine modification. Zn(2+) contacts are provided by glutamine 110, histidine 112, glutamate 137, and histidine 276. Residue arginine 295 is part of the active site.

It belongs to the mannose-6-phosphate isomerase type 1 family. It depends on Zn(2+) as a cofactor.

The protein resides in the cytoplasm. The enzyme catalyses D-mannose 6-phosphate = D-fructose 6-phosphate. It functions in the pathway nucleotide-sugar biosynthesis; GDP-alpha-D-mannose biosynthesis; alpha-D-mannose 1-phosphate from D-fructose 6-phosphate: step 1/2. Functionally, isomerase that catalyzes the interconversion of fructose-6-P and mannose-6-P and has a critical role in the supply of D-mannose derivatives required for many eukaryotic glycosylation reactions. This Pan troglodytes (Chimpanzee) protein is Mannose-6-phosphate isomerase (MPI).